Here is a 244-residue protein sequence, read N- to C-terminus: uncharacterized protein (244 aa).

2 stretches are compositionally biased toward basic and acidic residues: residues 1-10 and 100-127; these read MNDPFARMET and GTRG…HGEE. Disordered stretches follow at residues 1-79, 100-130, and 219-244; these read MNDP…GEEL, GTRG…EPNY, and TGAS…EIKL.

This is an uncharacterized protein from Homo sapiens (Human).